Reading from the N-terminus, the 156-residue chain is Cyanate hydratase (156 aa).

Catalysis depends on residues Arg-96, Glu-99, and Ser-122.

Belongs to the cyanase family.

The catalysed reaction is cyanate + hydrogencarbonate + 3 H(+) = NH4(+) + 2 CO2. Its function is as follows. Catalyzes the reaction of cyanate with bicarbonate to produce ammonia and carbon dioxide. This Burkholderia thailandensis (strain ATCC 700388 / DSM 13276 / CCUG 48851 / CIP 106301 / E264) protein is Cyanate hydratase.